The sequence spans 118 residues: Protein MT2260 (118 aa).

The protein belongs to the HesB/IscA family.

In Mycobacterium tuberculosis (strain CDC 1551 / Oshkosh), this protein is Protein MT2260.